A 313-amino-acid chain; its full sequence is MSGIDPKRFGKVAVLFGGESAEREVSLTSGRLVLQGLRDAGIDAHLFDPAERPLSALKDEGFVRAFNALHGGYGENGQIQGALDFYGIRYTGSGVLGSALGLDKFRTKLVWQQTGVPTPPFETVLRGDDYAARATEIVAKLGLPLFVKPASEGSSVAVLKVKTADALPAALSEAATHDKIVIVEKSIEGGGEYTACIAGDLDLPLIKIVPAGEFYDYHAKYVADDTQYLIPCGLPAAQEAELKRIARRAFDVLGCTDWGRADFMLDAAGNAYFLEVNTAPGMTDHSLPPKAARSIGISYSELVVKVLSLTLND.

Residues 108-308 (KLVWQQTGVP…YSELVVKVLS (201 aa)) enclose the ATP-grasp domain. Residue 138-193 (VAKLGLPLFVKPASEGSSVAVLKVKTADALPAALSEAATHDKIVIVEKSIEGGGEY) coordinates ATP. Asp-262, Glu-275, and Asn-277 together coordinate Mg(2+).

This sequence belongs to the D-alanine--D-alanine ligase family. Requires Mg(2+) as cofactor. Mn(2+) serves as cofactor.

Its subcellular location is the cytoplasm. It carries out the reaction 2 D-alanine + ATP = D-alanyl-D-alanine + ADP + phosphate + H(+). The protein operates within cell wall biogenesis; peptidoglycan biosynthesis. Functionally, cell wall formation. The sequence is that of D-alanine--D-alanine ligase from Burkholderia vietnamiensis (strain G4 / LMG 22486) (Burkholderia cepacia (strain R1808)).